A 382-amino-acid polypeptide reads, in one-letter code: ATP phosphoribosyltransferase regulatory subunit (382 aa).

Belongs to the class-II aminoacyl-tRNA synthetase family. HisZ subfamily. In terms of assembly, heteromultimer composed of HisG and HisZ subunits.

It localises to the cytoplasm. Its pathway is amino-acid biosynthesis; L-histidine biosynthesis; L-histidine from 5-phospho-alpha-D-ribose 1-diphosphate: step 1/9. Functionally, required for the first step of histidine biosynthesis. May allow the feedback regulation of ATP phosphoribosyltransferase activity by histidine. This chain is ATP phosphoribosyltransferase regulatory subunit, found in Burkholderia lata (strain ATCC 17760 / DSM 23089 / LMG 22485 / NCIMB 9086 / R18194 / 383).